Reading from the N-terminus, the 344-residue chain is Melanocyte-stimulating hormone receptor (344 aa).

The Extracellular portion of the chain corresponds to 1 to 37; the sequence is MPMQGAQRKLLGSLNSTPTATSNLGLAANHTGAPCLE. N-linked (GlcNAc...) asparagine glycosylation is present at asparagine 29. The helical transmembrane segment at 38-63 threads the bilayer; it reads VSIPDGLFLSLGLVSLVENVLVVAAI. The Cytoplasmic portion of the chain corresponds to 64-72; it reads AKNRNLHSS. A helical transmembrane segment spans residues 73–93; sequence MYCFICCLALSDLLVSGSNML. Topologically, residues 94-118 are extracellular; sequence ETAIILLLEAGTLATRASVVQQLHN. The helical transmembrane segment at 119–140 threads the bilayer; it reads TIDVLTCSSMLCSLCFLGAIAV. The Cytoplasmic portion of the chain corresponds to 141–163; it reads DRYISIFYALRYHSIMTLPRAQR. A helical transmembrane segment spans residues 164-183; sequence AIAAIWVTSVLSSTLFITYY. Topologically, residues 184-191 are extracellular; the sequence is DHAAVLLC. A helical transmembrane segment spans residues 192 to 211; the sequence is LVVFFLAMLVLMAVLYVHML. Residues 212–240 lie on the Cytoplasmic side of the membrane; sequence ARACQHAQGIIRLHNRQLPAHKGFGLRGA. Residues 241-266 traverse the membrane as a helical segment; sequence ATLTILLGIFFLCWGPFFLHLTLVVF. Topologically, residues 267–279 are extracellular; the sequence is CPQHLTCNCIFKN. The chain crosses the membrane as a helical span at residues 280 to 300; it reads FKVFLTLIICNTIIDPLIYAF. The Cytoplasmic segment spans residues 301-344; that stretch reads RSQELRRTLKEVLLCSWWPGCGAEGGGDSVWPGSCVTLRGPLPP. Residue cysteine 315 is the site of S-palmitoyl cysteine attachment.

The protein belongs to the G-protein coupled receptor 1 family. In terms of assembly, interacts with MGRN1, but does not undergo MGRN1-mediated ubiquitination; this interaction competes with GNAS-binding and thus inhibits agonist-induced cAMP production. Interacts with OPN3; the interaction results in a decrease in MC1R-mediated cAMP signaling and ultimately a decrease in melanin production in melanocytes.

It is found in the cell membrane. In terms of biological role, receptor for MSH (alpha, beta and gamma) and ACTH. The activity of this receptor is mediated by G proteins which activate adenylate cyclase. Mediates melanogenesis, the production of eumelanin (black/brown) and phaeomelanin (red/yellow), via regulation of cAMP signaling in melanocytes. In Mico argentatus (Silvery marmoset), this protein is Melanocyte-stimulating hormone receptor (MC1R).